The chain runs to 89 residues: Small ribosomal subunit protein uS15 (89 aa).

It belongs to the universal ribosomal protein uS15 family. In terms of assembly, part of the 30S ribosomal subunit. Forms a bridge to the 50S subunit in the 70S ribosome, contacting the 23S rRNA.

In terms of biological role, one of the primary rRNA binding proteins, it binds directly to 16S rRNA where it helps nucleate assembly of the platform of the 30S subunit by binding and bridging several RNA helices of the 16S rRNA. Functionally, forms an intersubunit bridge (bridge B4) with the 23S rRNA of the 50S subunit in the ribosome. The protein is Small ribosomal subunit protein uS15 of Anaeromyxobacter sp. (strain Fw109-5).